The primary structure comprises 101 residues: NAD(P)H-quinone oxidoreductase subunit 4L, chloroplastic (101 aa).

3 helical membrane passes run 2 to 22, 32 to 52, and 61 to 81; these read MFERVLFLSVYLFSIGIYGLI, ICLELILNSINLNLVTFSDLF, and IFAIFVIALAAAEAAIGLSIL.

It belongs to the complex I subunit 4L family. In terms of assembly, NDH is composed of at least 16 different subunits, 5 of which are encoded in the nucleus.

The protein resides in the plastid. It localises to the chloroplast thylakoid membrane. It carries out the reaction a plastoquinone + NADH + (n+1) H(+)(in) = a plastoquinol + NAD(+) + n H(+)(out). The catalysed reaction is a plastoquinone + NADPH + (n+1) H(+)(in) = a plastoquinol + NADP(+) + n H(+)(out). Functionally, NDH shuttles electrons from NAD(P)H:plastoquinone, via FMN and iron-sulfur (Fe-S) centers, to quinones in the photosynthetic chain and possibly in a chloroplast respiratory chain. The immediate electron acceptor for the enzyme in this species is believed to be plastoquinone. Couples the redox reaction to proton translocation, and thus conserves the redox energy in a proton gradient. The polypeptide is NAD(P)H-quinone oxidoreductase subunit 4L, chloroplastic (Zea mays (Maize)).